A 406-amino-acid chain; its full sequence is Protease ElaD (406 aa).

Histidine 234 is a catalytic residue. Cysteine 316 acts as the Nucleophile in catalysis.

This sequence belongs to the peptidase C79 family.

Protease that can act as an efficient and specific deubiquitinating enzyme in vitro. Does not possess desumoylating and deneddylating activities. The physiological substrate is unknown. In Escherichia coli O139:H28 (strain E24377A / ETEC), this protein is Protease ElaD (elaD).